The primary structure comprises 140 residues: UPF0654 protein C22G7.11c (140 aa).

Disordered stretches follow at residues 1-88 (MPDP…DPMK) and 110-140 (YKATMHNPNVSKQAKTRAQRALEEIDDETQA). Basic and acidic residues predominate over residues 24–33 (AKERAEDYIE). A compositionally biased stretch (polar residues) spans 34–44 (SHSSGQETGDY). The span at 54–71 (DYEDLGDYDEDADFDNEE) shows a compositional bias: acidic residues.

The protein belongs to the UPF0654 (con-6) family.

This is UPF0654 protein C22G7.11c from Schizosaccharomyces pombe (strain 972 / ATCC 24843) (Fission yeast).